A 414-amino-acid chain; its full sequence is Probable mannose-1-phosphate guanyltransferase (414 aa).

This sequence belongs to the transferase hexapeptide repeat family.

It localises to the cytoplasm. It is found in the nucleus. The catalysed reaction is alpha-D-mannose 1-phosphate + GTP + H(+) = GDP-alpha-D-mannose + diphosphate. The protein operates within nucleotide-sugar biosynthesis; GDP-alpha-D-mannose biosynthesis; GDP-alpha-D-mannose from alpha-D-mannose 1-phosphate (GTP route): step 1/1. In terms of biological role, involved in cell wall synthesis where it is required for glycosylation. This is Probable mannose-1-phosphate guanyltransferase from Schizosaccharomyces pombe (strain 972 / ATCC 24843) (Fission yeast).